Reading from the N-terminus, the 37-residue chain is Potassium channel toxin alpha-KTx 3.9 (37 aa).

3 cysteine pairs are disulfide-bonded: Cys7–Cys27, Cys13–Cys32, and Cys17–Cys34. An interaction with Ca(2+)-activated K(+) channels region spans residues 25–32; that stretch reads GKCMNRKC.

This sequence belongs to the short scorpion toxin superfamily. Potassium channel inhibitor family. Alpha-KTx 03 subfamily. Expressed by the venom gland.

Its subcellular location is the secreted. Functionally, binds and inhibits potassium channels. Intracerebroventricular injection into mice induces paralyzing symptoms followed by death. Its binding affinity to rat brain synaptosomes is 5-fold lower than this of KTX 1. The chain is Potassium channel toxin alpha-KTx 3.9 (KTX3) from Buthus occitanus tunetanus (Common European scorpion).